Here is a 43-residue protein sequence, read N- to C-terminus: Mu-conotoxin-like Cal 12.2c (43 aa).

Arg-1 is a propeptide. Cystine bridges form between Cys-4-Cys-16, Cys-11-Cys-24, Cys-18-Cys-29, and Cys-23-Cys-35. Trp-31 bears the 6'-bromotryptophan mark. Pro-36 is modified (4-hydroxyproline). 6'-bromotryptophan is present on Trp-40.

As to expression, expressed by the venom duct.

The protein localises to the secreted. In terms of biological role, mu-conotoxins block voltage-gated sodium channels. This toxin reversibly blocks voltage-gated sodium channel in cephalopods, with no alteration in the voltage dependence of sodium conductance or on the kinetics of inactivation. This chain is Mu-conotoxin-like Cal 12.2c, found in Californiconus californicus (California cone).